A 236-amino-acid polypeptide reads, in one-letter code: Large ribosomal subunit protein uL3 (236 aa).

The protein belongs to the universal ribosomal protein uL3 family. As to quaternary structure, part of the 50S ribosomal subunit. Forms a cluster with proteins L14 and L19.

Functionally, one of the primary rRNA binding proteins, it binds directly near the 3'-end of the 23S rRNA, where it nucleates assembly of the 50S subunit. The protein is Large ribosomal subunit protein uL3 of Anaeromyxobacter dehalogenans (strain 2CP-1 / ATCC BAA-258).